Reading from the N-terminus, the 278-residue chain is 4-deoxy-L-threo-5-hexosulose-uronate ketol-isomerase (278 aa).

Zn(2+)-binding residues include histidine 196, histidine 198, glutamate 203, and histidine 245.

Belongs to the KduI family. Zn(2+) is required as a cofactor.

The enzyme catalyses 5-dehydro-4-deoxy-D-glucuronate = 3-deoxy-D-glycero-2,5-hexodiulosonate. The protein operates within glycan metabolism; pectin degradation; 2-dehydro-3-deoxy-D-gluconate from pectin: step 4/5. In terms of biological role, catalyzes the isomerization of 5-dehydro-4-deoxy-D-glucuronate to 3-deoxy-D-glycero-2,5-hexodiulosonate. The polypeptide is 4-deoxy-L-threo-5-hexosulose-uronate ketol-isomerase (Edwardsiella ictaluri (strain 93-146)).